Here is a 378-residue protein sequence, read N- to C-terminus: uncharacterized protein (378 aa).

The next 11 helical transmembrane spans lie at 12–34 (SLAF…STFF), 44–66 (VKIY…IFLG), 92–112 (SIAL…LMLI), 132–154 (GFAS…IFLA), 161–180 (EVYA…SIIT), 200–222 (TFLL…IAMM), 235–257 (VEIY…FWGV), 267–285 (VFPL…LFFA), 290–312 (LIFV…RVYI), 327–349 (FLSL…FLFI), and 356–373 (LSAL…FIYL).

It localises to the cell membrane. This is an uncharacterized protein from Aquifex aeolicus (strain VF5).